The primary structure comprises 2178 residues: Genome polyprotein (2178 aa).

The tract at residues 1 to 20 (MGAQVSTQKSGSHENQNILT) is disordered. Gly2 carries the N-myristoyl glycine; by host lipid modification. At 2-1490 (GAQVSTQKSG…AVNQASMIIN (1489 aa)) the chain is on the cytoplasmic side. Residues 564–584 (ALTEGLSDELEEVIVEKTKQT) form an amphipathic alpha-helix region. Active-site for protease 2A activity residues include His875 and Asp893. Zn(2+) is bound by residues Cys910 and Cys912. Residue Cys964 is the For protease 2A activity of the active site. 2 residues coordinate Zn(2+): Cys970 and His972. Residues 1100-1172 (NDGWFRKFND…HDSNPTQEKR (73 aa)) are membrane-binding. Residues 1100–1238 (NDGWFRKFND…TPGSGKSLTT (139 aa)) are oligomerization. The RNA-binding stretch occupies residues 1121–1125 (ANKIS). Residues 1204-1360 (KNKITNYMQF…STYTKNGKLN (157 aa)) form the SF3 helicase domain. Residues Cys1368, Cys1371, Cys1380, and Cys1385 each coordinate Zn(2+). The segment at 1368-1385 (CKDCHQPSNFKKCCPLVC) adopts a C4-type zinc-finger fold. Positions 1412-1419 (DYKNKVKI) are RNA-binding. Positions 1423 to 1428 (LEVLFQ) are oligomerization. Residues 1491 to 1506 (TILMFVSTLGIVYVIY) lie within the membrane without spanning it. At 1507 to 2178 (KLFAQTQGPY…VLRRRWLDLF (672 aa)) the chain is on the cytoplasmic side. Tyr1516 carries the O-(5'-phospho-RNA)-tyrosine modification. Positions 1537–1714 (GPNTEFALSL…FSAQLKKQYF (178 aa)) constitute a Peptidase C3 domain. Residues His1576, Glu1607, and Cys1682 each act as for protease 3C activity in the active site. The RdRp catalytic domain occupies 1946-2059 (HLMAFDYSNF…SYPFELDSNI (114 aa)). Residues Asp1951 and Asp2045 each contribute to the Mg(2+) site.

This sequence belongs to the picornaviruses polyprotein family. In terms of assembly, interacts with capsid protein VP1 and capsid protein VP3 to form heterotrimeric protomers. Interacts with capsid protein VP0, and capsid protein VP3 to form heterotrimeric protomers. Five protomers subsequently associate to form pentamers which serve as building blocks for the capsid. Interacts with capsid protein VP2, capsid protein VP3 and capsid protein VP4 following cleavage of capsid protein VP0. As to quaternary structure, interacts with capsid protein VP1 and capsid protein VP3 in the mature capsid. In terms of assembly, interacts with capsid protein VP0 and capsid protein VP1 to form heterotrimeric protomers. Five protomers subsequently associate to form pentamers which serve as building blocks for the capsid. Interacts with capsid protein VP4 in the mature capsid. Interacts with protein 2C; this interaction may be important for virion morphogenesis. Interacts with capsid protein VP1 and capsid protein VP3. As to quaternary structure, homodimer. In terms of assembly, homohexamer; forms a hexameric ring structure with 6-fold symmetry characteristic of AAA+ ATPases. Interacts (via N-terminus) with host RTN3 (via reticulon domain); this interaction is important for viral replication. Interacts with capsid protein VP3; this interaction may be important for virion morphogenesis. Interacts with protein 3CD. As to quaternary structure, homodimer. Interacts with host GBF1. Interacts (via GOLD domain) with host ACBD3 (via GOLD domain); this interaction allows the formation of a viral protein 3A/ACBD3 heterotetramer with a 2:2 stoichiometry, which will stimulate the recruitment of host PI4KB in order to synthesize PI4P at the viral RNA replication sites. In terms of assembly, interacts with RNA-directed RNA polymerase. Interacts with protein 3AB and with RNA-directed RNA polymerase. As to quaternary structure, interacts with Viral protein genome-linked and with protein 3CD. The cofactor is Mg(2+). Post-translationally, specific enzymatic cleavages in vivo by the viral proteases yield processing intermediates and the mature proteins. Myristoylation is required for the formation of pentamers during virus assembly. Further assembly of 12 pentamers and a molecule of genomic RNA generates the provirion. In terms of processing, during virion maturation, immature virions are rendered infectious following cleavage of VP0 into VP4 and VP2. This maturation seems to be an autocatalytic event triggered by the presence of RNA in the capsid and it is followed by a conformational change infectious virion. Post-translationally, myristoylation is required during RNA encapsidation and formation of the mature virus particle. VPg is uridylylated by the polymerase into VPg-pUpU. This acts as a nucleotide-peptide primer for the genomic RNA replication.

It is found in the virion. Its subcellular location is the host cytoplasm. The protein localises to the host cytoplasmic vesicle membrane. It localises to the host nucleus. It catalyses the reaction a ribonucleoside 5'-triphosphate + H2O = a ribonucleoside 5'-diphosphate + phosphate + H(+). The enzyme catalyses Selective cleavage of Tyr-|-Gly bond in the picornavirus polyprotein.. The catalysed reaction is RNA(n) + a ribonucleoside 5'-triphosphate = RNA(n+1) + diphosphate. It carries out the reaction Selective cleavage of Gln-|-Gly bond in the poliovirus polyprotein. In other picornavirus reactions Glu may be substituted for Gln, and Ser or Thr for Gly.. Replication or transcription is subject to high level of random mutations by the nucleotide analog ribavirin. In terms of biological role, forms an icosahedral capsid of pseudo T=3 symmetry with capsid proteins VP2 and VP3. The capsid is 300 Angstroms in diameter, composed of 60 copies of each capsid protein and enclosing the viral positive strand RNA genome. Capsid protein VP1 mainly forms the vertices of the capsid. Capsid protein VP1 interacts with host cell receptor to provide virion attachment to target host cells. This attachment induces virion internalization. Tyrosine kinases are probably involved in the entry process. After binding to its receptor, the capsid undergoes conformational changes. Capsid protein VP1 N-terminus (that contains an amphipathic alpha-helix) and capsid protein VP4 are externalized. Together, they shape a pore in the host membrane through which viral genome is translocated to host cell cytoplasm. Functionally, forms an icosahedral capsid of pseudo T=3 symmetry with capsid proteins VP2 and VP3. The capsid is 300 Angstroms in diameter, composed of 60 copies of each capsid protein and enclosing the viral positive strand RNA genome. Its function is as follows. Lies on the inner surface of the capsid shell. After binding to the host receptor, the capsid undergoes conformational changes. Capsid protein VP4 is released, Capsid protein VP1 N-terminus is externalized, and together, they shape a pore in the host membrane through which the viral genome is translocated into the host cell cytoplasm. Component of immature procapsids, which is cleaved into capsid proteins VP4 and VP2 after maturation. Allows the capsid to remain inactive before the maturation step. In terms of biological role, cysteine protease that cleaves viral polyprotein and specific host proteins. It is responsible for the autocatalytic cleavage between the P1 and P2 regions, which is the first cleavage occurring in the polyprotein. Also cleaves the host translation initiation factor EIF4G1, in order to shut down the capped cellular mRNA translation. Inhibits the host nucleus-cytoplasm protein and RNA trafficking by cleaving host members of the nuclear pores. Counteracts stress granule formation probably by antagonizing its assembly or promoting its dissassembly. Functionally, plays an essential role in the virus replication cycle by acting as a viroporin. Creates a pore in the host endoplasmic reticulum and as a consequence releases Ca2+ in the cytoplasm of infected cell. In turn, high levels of cytoplasmic calcium may trigger membrane trafficking and transport of viral ER-associated proteins to viroplasms, sites of viral genome replication. Its function is as follows. Induces and associates with structural rearrangements of intracellular membranes. Displays RNA-binding, nucleotide binding and NTPase activities. May play a role in virion morphogenesis and viral RNA encapsidation by interacting with the capsid protein VP3. Localizes the viral replication complex to the surface of membranous vesicles. Together with protein 3CD binds the Cis-Active RNA Element (CRE) which is involved in RNA synthesis initiation. Acts as a cofactor to stimulate the activity of 3D polymerase, maybe through a nucleid acid chaperone activity. In terms of biological role, localizes the viral replication complex to the surface of membranous vesicles. It inhibits host cell endoplasmic reticulum-to-Golgi apparatus transport and causes the disassembly of the Golgi complex, possibly through GBF1 interaction. This would result in depletion of MHC, trail receptors and IFN receptors at the host cell surface. Plays an essential role in viral RNA replication by recruiting ACBD3 and PI4KB at the viral replication sites, thereby allowing the formation of the rearranged membranous structures where viral replication takes place. Functionally, acts as a primer for viral RNA replication and remains covalently bound to viral genomic RNA. VPg is uridylylated prior to priming replication into VPg-pUpU. The oriI viral genomic sequence may act as a template for this. The VPg-pUpU is then used as primer on the genomic RNA poly(A) by the RNA-dependent RNA polymerase to replicate the viral genome. During genome replication, the VPg-RNA linkage is removed by the host TDP2, thereby accelerating replication. During the late stage of the replication cycle, host TDP2 is excluded from sites of viral RNA synthesis and encapsidation, allowing for the generation of progeny virions. Its function is as follows. Involved in the viral replication complex and viral polypeptide maturation. It exhibits protease activity with a specificity and catalytic efficiency that is different from protease 3C. Protein 3CD lacks polymerase activity. Protein 3CD binds to the 5'UTR of the viral genome. Replicates the viral genomic RNA on the surface of intracellular membranes. May form linear arrays of subunits that propagate along a strong head-to-tail interaction called interface-I. Covalently attaches UMP to a tyrosine of VPg, which is used to prime RNA synthesis. The positive stranded RNA genome is first replicated at virus induced membranous vesicles, creating a dsRNA genomic replication form. This dsRNA is then used as template to synthesize positive stranded RNA genomes. ss(+)RNA genomes are either translated, replicated or encapsidated. In terms of biological role, major viral protease that mediates proteolytic processing of the polyprotein. Cleaves host EIF5B, contributing to host translation shutoff. Also cleaves host PABPC1, contributing to host translation shutoff. Cleaves host NLRP1, triggers host N-glycine-mediated degradation of the autoinhibitory NLRP1 N-terminal fragment. This chain is Genome polyprotein, found in Homo sapiens (Human).